The following is a 448-amino-acid chain: Glutamyl-tRNA reductase (448 aa).

Substrate is bound by residues 49-52 (TCNR), S109, 114-116 (ETQ), and Q120. The Nucleophile role is filled by C50. Residue 189 to 194 (GAGEMS) coordinates NADP(+).

The protein belongs to the glutamyl-tRNA reductase family. As to quaternary structure, homodimer.

It carries out the reaction (S)-4-amino-5-oxopentanoate + tRNA(Glu) + NADP(+) = L-glutamyl-tRNA(Glu) + NADPH + H(+). It functions in the pathway porphyrin-containing compound metabolism; protoporphyrin-IX biosynthesis; 5-aminolevulinate from L-glutamyl-tRNA(Glu): step 1/2. In terms of biological role, catalyzes the NADPH-dependent reduction of glutamyl-tRNA(Glu) to glutamate 1-semialdehyde (GSA). The polypeptide is Glutamyl-tRNA reductase (Staphylococcus aureus (strain Mu3 / ATCC 700698)).